The sequence spans 128 residues: S-adenosylmethionine decarboxylase proenzyme (128 aa).

Residue S61 is the Schiff-base intermediate with substrate; via pyruvic acid of the active site. At S61 the chain carries Pyruvic acid (Ser); by autocatalysis. H66 acts as the Proton acceptor; for processing activity in catalysis. Residue C81 is the Proton donor; for catalytic activity of the active site.

Belongs to the prokaryotic AdoMetDC family. Type 1 subfamily. Heterotetramer of two alpha and two beta chains arranged as a dimer of alpha/beta heterodimers. Requires pyruvate as cofactor. Is synthesized initially as an inactive proenzyme. Formation of the active enzyme involves a self-maturation process in which the active site pyruvoyl group is generated from an internal serine residue via an autocatalytic post-translational modification. Two non-identical subunits are generated from the proenzyme in this reaction, and the pyruvate is formed at the N-terminus of the alpha chain, which is derived from the carboxyl end of the proenzyme. The post-translation cleavage follows an unusual pathway, termed non-hydrolytic serinolysis, in which the side chain hydroxyl group of the serine supplies its oxygen atom to form the C-terminus of the beta chain, while the remainder of the serine residue undergoes an oxidative deamination to produce ammonia and the pyruvoyl group blocking the N-terminus of the alpha chain.

The enzyme catalyses S-adenosyl-L-methionine + H(+) = S-adenosyl 3-(methylsulfanyl)propylamine + CO2. The protein operates within amine and polyamine biosynthesis; S-adenosylmethioninamine biosynthesis; S-adenosylmethioninamine from S-adenosyl-L-methionine: step 1/1. In terms of biological role, catalyzes the decarboxylation of S-adenosylmethionine to S-adenosylmethioninamine (dcAdoMet), the propylamine donor required for the synthesis of the polyamines spermine and spermidine from the diamine putrescine. The sequence is that of S-adenosylmethionine decarboxylase proenzyme from Parasynechococcus marenigrum (strain WH8102).